The primary structure comprises 400 residues: CCA-adding enzyme (400 aa).

Residues G8 and R11 each contribute to the ATP site. The CTP site is built by G8 and R11. Mg(2+) is bound by residues D21 and D23. ATP is bound by residues R91, R137, and R140. R91, R137, and R140 together coordinate CTP. Residues 217 to 322 (NFQYAMTALK…IDLFNKWDVW (106 aa)) enclose the HD domain.

This sequence belongs to the tRNA nucleotidyltransferase/poly(A) polymerase family. Bacterial CCA-adding enzyme type 2 subfamily. It depends on Mg(2+) as a cofactor.

It carries out the reaction a tRNA precursor + 2 CTP + ATP = a tRNA with a 3' CCA end + 3 diphosphate. It catalyses the reaction a tRNA with a 3' CCA end + 2 CTP + ATP = a tRNA with a 3' CCACCA end + 3 diphosphate. Its function is as follows. Catalyzes the addition and repair of the essential 3'-terminal CCA sequence in tRNAs without using a nucleic acid template. Adds these three nucleotides in the order of C, C, and A to the tRNA nucleotide-73, using CTP and ATP as substrates and producing inorganic pyrophosphate. tRNA 3'-terminal CCA addition is required both for tRNA processing and repair. Also involved in tRNA surveillance by mediating tandem CCA addition to generate a CCACCA at the 3' terminus of unstable tRNAs. While stable tRNAs receive only 3'-terminal CCA, unstable tRNAs are marked with CCACCA and rapidly degraded. The protein is CCA-adding enzyme of Actinobacillus succinogenes (strain ATCC 55618 / DSM 22257 / CCUG 43843 / 130Z).